Here is a 179-residue protein sequence, read N- to C-terminus: MTQVSGASDVPSMGRRQFMNLLTFGSVTGVALGALYPVVNYFIPPSSGGSGGGVAAKDALGNDVVLSKFLADHNVGDRTLVQGLKGDPTYLVVESSEAIGDYGINAVCTHLGCVVPWNASENKFKCPCHGSQYDATGKVVRGPAPLSLALAHVSVTDDKVFLSPWTETDFRTGDNPWWA.

A helical transmembrane segment spans residues 21-43 (LLTFGSVTGVALGALYPVVNYFI). The Rieske domain occupies 61 to 162 (GNDVVLSKFL…VSVTDDKVFL (102 aa)). [2Fe-2S] cluster is bound by residues Cys108, His110, Cys126, and His129. A disulfide bridge links Cys113 with Cys128.

It belongs to the Rieske iron-sulfur protein family. In terms of assembly, the 4 large subunits of the cytochrome b6-f complex are cytochrome b6, subunit IV (17 kDa polypeptide, PetD), cytochrome f and the Rieske protein, while the 4 small subunits are PetG, PetL, PetM and PetN. The complex functions as a dimer. Requires [2Fe-2S] cluster as cofactor.

It is found in the cellular thylakoid membrane. The enzyme catalyses 2 oxidized [plastocyanin] + a plastoquinol + 2 H(+)(in) = 2 reduced [plastocyanin] + a plastoquinone + 4 H(+)(out). Functionally, component of the cytochrome b6-f complex, which mediates electron transfer between photosystem II (PSII) and photosystem I (PSI), cyclic electron flow around PSI, and state transitions. The chain is Cytochrome b6-f complex iron-sulfur subunit from Synechococcus elongatus (strain ATCC 33912 / PCC 7942 / FACHB-805) (Anacystis nidulans R2).